Consider the following 146-residue polypeptide: Probable cyclic pyranopterin monophosphate synthase (146 aa).

Substrate is bound by residues Leu66–His68 and Met102–Glu103. The active site involves Asp117.

This sequence belongs to the MoaC family. In terms of assembly, homohexamer; trimer of dimers.

The enzyme catalyses (8S)-3',8-cyclo-7,8-dihydroguanosine 5'-triphosphate = cyclic pyranopterin phosphate + diphosphate. The protein operates within cofactor biosynthesis; molybdopterin biosynthesis. Functionally, catalyzes the conversion of (8S)-3',8-cyclo-7,8-dihydroguanosine 5'-triphosphate to cyclic pyranopterin monophosphate (cPMP). The polypeptide is Probable cyclic pyranopterin monophosphate synthase (Aeropyrum pernix (strain ATCC 700893 / DSM 11879 / JCM 9820 / NBRC 100138 / K1)).